A 161-amino-acid chain; its full sequence is NADH-quinone oxidoreductase subunit I (161 aa).

2 4Fe-4S ferredoxin-type domains span residues 53–82 (RRYP…IEAE) and 92–121 (TRYD…EGPN). The [4Fe-4S] cluster site is built by Cys-62, Cys-65, Cys-68, Cys-72, Cys-101, Cys-104, Cys-107, and Cys-111.

It belongs to the complex I 23 kDa subunit family. As to quaternary structure, NDH-1 is composed of 14 different subunits. Subunits NuoA, H, J, K, L, M, N constitute the membrane sector of the complex. [4Fe-4S] cluster serves as cofactor.

Its subcellular location is the cell inner membrane. It catalyses the reaction a quinone + NADH + 5 H(+)(in) = a quinol + NAD(+) + 4 H(+)(out). In terms of biological role, NDH-1 shuttles electrons from NADH, via FMN and iron-sulfur (Fe-S) centers, to quinones in the respiratory chain. The immediate electron acceptor for the enzyme in this species is believed to be ubiquinone. Couples the redox reaction to proton translocation (for every two electrons transferred, four hydrogen ions are translocated across the cytoplasmic membrane), and thus conserves the redox energy in a proton gradient. The protein is NADH-quinone oxidoreductase subunit I of Hyphomonas neptunium (strain ATCC 15444).